Here is a 571-residue protein sequence, read N- to C-terminus: Phototropic-responsive NPH3 family protein NPY1 (571 aa).

The 69-residue stretch at 29–97 (SDVTIHVGEV…CYGMTVTLNA (69 aa)) folds into the BTB domain. An NPH3 domain is found at 210–468 (DWWVEDVCEL…VQVLYFEQLR (259 aa)). A Phosphotyrosine modification is found at Y409. The disordered stretch occupies residues 475–571 (ASVAASSHSP…SSRRRRHSIS (97 aa)). A compositionally biased stretch (basic and acidic residues) spans 484–504 (PVEKTEENKGEEATKKVELSK). Low complexity predominate over residues 540–562 (SNKSSEVSSGSSQSPPAKSSSSS).

This sequence belongs to the NPH3 family. As to quaternary structure, component of a complex made of PINs (e.g. PIN1 and PIN2), MAB4/MELs (e.g. NPY1/MAB4 and NPY5/MEL1) and AGC kinases (e.g. D6PK and PID) at the plasma membrane. Binds directly to PIN2 and PID. In terms of tissue distribution, accumulates in organ primordia such as cotyledons, leaves and floral organs. Expressed mainly in the apical regions of embryos including cotyledon tips and the apical meristem. Induced by the transcription factor ARF5/MP at the periphery of inflorescence meristems. Highly expressed in primary root tips and radicles.

The protein localises to the late endosome. It localises to the cell membrane. Its subcellular location is the cytoplasm. The protein resides in the cytosol. It functions in the pathway protein modification; protein ubiquitination. May act as a substrate-specific adapter of an E3 ubiquitin-protein ligase complex (CUL3-RBX1-BTB) which mediates the ubiquitination and subsequent proteasomal degradation of target proteins. Coregulates with PID the auxin-mediated plant organogenesis. Regulates basipetal PIN proteins (e.g. PIN1) polarization to establish inward auxin transport from the L1 surface of incipient organ primordia; this process is essential for the progression of flower organs development. Recruited to the plasma membrane by PINs (e.g. PIN1 and PIN2) and, in concert with AGC kinases-mediated (e.g. D6PK and PID) PINs phosphorylation, maintains their cell polarity (apical or basal) through limiting lateral diffusion-based escape. Induces auxin response in inner cell layers through a shift in PIN1 localization. Influences cotyledon development by regulating auxin distribution mainly in the protodermal cell layer. May play an essential role in root gravitropic responses. The sequence is that of Phototropic-responsive NPH3 family protein NPY1 from Arabidopsis thaliana (Mouse-ear cress).